We begin with the raw amino-acid sequence, 600 residues long: Glutamine--fructose-6-phosphate aminotransferase [isomerizing] (600 aa).

The active-site Nucleophile; for GATase activity is Cys2. The region spanning 2–217 (CGIVGYIGQL…DKEMVIVTDD (216 aa)) is the Glutamine amidotransferase type-2 domain. SIS domains are found at residues 283-422 (IAAA…KNGI) and 452-590 (IARE…VDKP). Lys595 (for Fru-6P isomerization activity) is an active-site residue.

Homodimer.

The protein localises to the cytoplasm. The enzyme catalyses D-fructose 6-phosphate + L-glutamine = D-glucosamine 6-phosphate + L-glutamate. In terms of biological role, catalyzes the first step in hexosamine metabolism, converting fructose-6P into glucosamine-6P using glutamine as a nitrogen source. The sequence is that of Glutamine--fructose-6-phosphate aminotransferase [isomerizing] from Bacillus subtilis (strain 168).